A 367-amino-acid polypeptide reads, in one-letter code: Gelsolin-like protein 1 (367 aa).

Positions 1-185 are actin binding; sequence MATGLIKAKE…GQKQQIYVHE (185 aa). Gelsolin-like repeat units lie at residues 56–141 and 179–225; these read NFKV…ELFR and QQIY…KAMQ. Residues 106–109 are actin-actin interfilament contact point; the sequence is DEYG. The tract at residues 186–295 is actin binding, Actin-severing; sequence VPLVKERLDH…LKTTEVKRGA (110 aa). The disordered stretch occupies residues 235 to 257; sequence PKAEAETLEDESTPESHKFYTSL. The stretch at 287-322 is one Gelsolin-like 3 repeat; that stretch reads KTTEVKRGAVNSKDFSSNDVFILDTGDQCFVWVGKG. An actin-severing, Ca-sensitive region spans residues 296–366; it reads VNSKDFSSND…LCKAFNVAIA (71 aa).

It belongs to the villin/gelsolin family. Interacts with actin monomers and filaments. Expressed in circular and longitudinal muscle, pseudohearts, pharynx and gizzard. Also expressed in male germ cells at the proximal pole of primary spermatocytes in 16 cell-stage morulae, and in the distal parts of the spermatocytes in 32 and 64 cell-stage morulae. In the spermatids of the 128 cell-stage morulae it is expressed at the proximal pole of the elongated nucleus and the distal pole near the base of the flagellae.

It localises to the cytoplasm. The protein localises to the cytoskeleton. In terms of biological role, calcium-regulated protein that binds to the plus (or barbed) ends of actin monomers or filaments, preventing monomer exchange (end-blocking or capping). Can promote the assembly of monomers into filaments (nucleation) as well as sever existing filaments. This Lumbricus terrestris (Common earthworm) protein is Gelsolin-like protein 1.